The primary structure comprises 367 residues: UDP-N-acetylglucosamine--N-acetylmuramyl-(pentapeptide) pyrophosphoryl-undecaprenol N-acetylglucosamine transferase (367 aa).

Residues 10–12 (TGG), Asn124, Ser196, and Gln300 each bind UDP-N-acetyl-alpha-D-glucosamine.

This sequence belongs to the glycosyltransferase 28 family. MurG subfamily.

Its subcellular location is the cell membrane. It carries out the reaction di-trans,octa-cis-undecaprenyl diphospho-N-acetyl-alpha-D-muramoyl-L-alanyl-D-glutamyl-meso-2,6-diaminopimeloyl-D-alanyl-D-alanine + UDP-N-acetyl-alpha-D-glucosamine = di-trans,octa-cis-undecaprenyl diphospho-[N-acetyl-alpha-D-glucosaminyl-(1-&gt;4)]-N-acetyl-alpha-D-muramoyl-L-alanyl-D-glutamyl-meso-2,6-diaminopimeloyl-D-alanyl-D-alanine + UDP + H(+). Its pathway is cell wall biogenesis; peptidoglycan biosynthesis. In terms of biological role, cell wall formation. Catalyzes the transfer of a GlcNAc subunit on undecaprenyl-pyrophosphoryl-MurNAc-pentapeptide (lipid intermediate I) to form undecaprenyl-pyrophosphoryl-MurNAc-(pentapeptide)GlcNAc (lipid intermediate II). This is UDP-N-acetylglucosamine--N-acetylmuramyl-(pentapeptide) pyrophosphoryl-undecaprenol N-acetylglucosamine transferase from Natranaerobius thermophilus (strain ATCC BAA-1301 / DSM 18059 / JW/NM-WN-LF).